A 203-amino-acid polypeptide reads, in one-letter code: Twist-related protein 1 (203 aa).

The segment covering 1 to 18 has biased composition (low complexity); the sequence is MMQDVSSSPVSPADDSLS. The interval 1-105 is disordered; it reads MMQDVSSSPV…SGGGSPQSYE (105 aa). Basic residues predominate over residues 34-43; that stretch reads RGGRKRRSSR. Composition is skewed to gly residues over residues 46-65 and 80-100; these read AGGG…GGDE and GCGG…GGGS. In terms of domain architecture, bHLH spans 109–160; sequence TQRVMANVRGRQRTQSLNEAFAALRKIIPTLPSDKLSKIQTLKLAARYIDFL. The sufficient for transactivation activity stretch occupies residues 162 to 192; it reads QVLQSDELDSKMASCSYVAHERLSYAFSVWR.

Efficient DNA binding requires dimerization with another bHLH protein. Homodimer or heterodimer with E proteins such as TCF3. ID1 binds preferentially to TCF3 but does not interact efficiently with TWIST1 so ID1 levels control the amount of TCF3 available to dimerize with TWIST and thus determine the type of dimer formed.

It is found in the nucleus. Acts as a transcriptional regulator. Inhibits myogenesis by sequestrating E proteins, inhibiting trans-activation by MEF2, and inhibiting DNA-binding by MYOD1 through physical interaction. This interaction probably involves the basic domains of both proteins. Also represses expression of pro-inflammatory cytokines such as TNFA and IL1B. Regulates cranial suture patterning and fusion. Activates transcription as a heterodimer with E proteins. Regulates gene expression differentially, depending on dimer composition. Homodimers induce expression of FGFR2 and POSTN while heterodimers repress FGFR2 and POSTN expression and induce THBS1 expression. Heterodimerization is also required for osteoblast differentiation. Represses the activity of the circadian transcriptional activator: NPAS2-BMAL1 heterodimer. The protein is Twist-related protein 1 (TWIST1) of Callithrix jacchus (White-tufted-ear marmoset).